The chain runs to 651 residues: DNA mismatch repair protein MutL (651 aa).

Positions Thr383–Gln405 are disordered.

This sequence belongs to the DNA mismatch repair MutL/HexB family.

In terms of biological role, this protein is involved in the repair of mismatches in DNA. It is required for dam-dependent methyl-directed DNA mismatch repair. May act as a 'molecular matchmaker', a protein that promotes the formation of a stable complex between two or more DNA-binding proteins in an ATP-dependent manner without itself being part of a final effector complex. The chain is DNA mismatch repair protein MutL from Lacticaseibacillus casei (strain BL23) (Lactobacillus casei).